Here is a 454-residue protein sequence, read N- to C-terminus: Notoamide E oxidase notB (454 aa).

A helical membrane pass occupies residues 15 to 35; the sequence is SPAELTVIIVGLGIAGLTAAI. Residues E48 and G61 each contribute to the FAD site. N75 carries N-linked (GlcNAc...) asparagine glycosylation. Residue R121 coordinates FAD. Active-site residues include R199 and Y229. FAD contacts are provided by D322 and G335.

This sequence belongs to the paxM FAD-dependent monooxygenase family. Requires FAD as cofactor.

The protein localises to the membrane. The enzyme catalyses notoamide E + NADPH + O2 + H(+) = notoamide C + NADP(+) + H2O. It carries out the reaction notoamide E + NADPH + O2 + H(+) = notoamide D + NADP(+) + H2O. It functions in the pathway alkaloid biosynthesis. Its function is as follows. FAD-dependent monooxygenase; part of the gene cluster that mediates the biosynthesis of notoamide, a fungal indole alkaloid that belongs to a family of natural products containing a characteristic bicyclo[2.2.2]diazaoctane core. The first step of notoamide biosynthesis involves coupling of L-proline and L-tryptophan by the bimodular NRPS notE, to produce cyclo-L-tryptophan-L-proline called brevianamide F. The reverse prenyltransferase notF then acts as a deoxybrevianamide E synthase and converts brevianamide F to deoxybrevianamide E via reverse prenylation at C-2 of the indole ring leading to the bicyclo[2.2.2]diazaoctane core. Deoxybrevianamide E is further hydroxylated at C-6 of the indole ring, likely catalyzed by the cytochrome P450 monooxygenase notG, to yield 6-hydroxy-deoxybrevianamide E. 6-hydroxy-deoxybrevianamide E is a specific substrate of the prenyltransferase notC for normal prenylation at C-7 to produce 6-hydroxy-7-prenyl-deoxybrevianamide, also called notoamide S. As the proposed pivotal branching point in notoamide biosynthesis, notoamide S can be diverted to notoamide E through an oxidative pyran ring closure putatively catalyzed by either notH cytochrome P450 monooxygenase or the notD FAD-linked oxidoreductase. This step would be followed by an indole 2,3-epoxidation-initiated pinacol-like rearrangement catalyzed by the notB FAD-dependent monooxygenase leading to the formation of notoamide C and notoamide D. On the other hand notoamide S is converted to notoamide T by notH (or notD), a bifunctional oxidase that also functions as the intramolecular Diels-Alderase responsible for generation of (+)-notoamide T. To generate antipodal (-)-notoaminide T, notH' (or notD') in Aspergillus versicolor is expected to catalyze a Diels-Alder reaction leading to the opposite stereochemistry. The remaining oxidoreductase notD (or notH) likely catalyzes the oxidative pyran ring formation to yield (+)-stephacidin A. The FAD-dependent monooxygenase notI is highly similar to notB and is predicted to catalyze a similar conversion from (+)-stephacidin A to (-)-notoamide B via the 2,3-epoxidation of (+)-stephacidin A followed by a pinacol-type rearrangement. Finally, it remains unclear which enzyme could be responsible for the final hydroxylation steps leading to notoamide A and sclerotiamide. The protein is Notoamide E oxidase notB of Aspergillus sp. (strain MF297-2).